Consider the following 215-residue polypeptide: UPF0502 protein PP_2442 (215 aa).

It belongs to the UPF0502 family.

This chain is UPF0502 protein PP_2442, found in Pseudomonas putida (strain ATCC 47054 / DSM 6125 / CFBP 8728 / NCIMB 11950 / KT2440).